Consider the following 579-residue polypeptide: Nif-specific regulatory protein (579 aa).

One can recognise a GAF domain in the interval 40 to 187 (DPVAEVPQIF…MVASLLEQAL (148 aa)). Residues 226-454 (IVGSSPAIAE…LENCVNRAAA (229 aa)) enclose the Sigma-54 factor interaction domain. ATP is bound by residues 254–261 (GESGTGKE) and 317–326 (ADGGTLFLDE). An inter-domain linker region spans residues 464-536 (EELACRQGAC…PLRTKTAQLS (73 aa)). The a divalent metal cation site is built by Cys-468 and Cys-473. Residues 502-529 (RVSAPPPEPAPAPEPAPEAPPREEVPLR) form a disordered region. Tandem repeats lie at residues 505–506 (AP), 507–508 (PP), 509–510 (EP), 511–512 (AP), 513–514 (AP), 515–516 (EP), and 517–518 (AP). A 7 X 2 AA tandem repeats of X-P region spans residues 505 to 518 (APPPEPAPAPEPAP). The segment covering 505-520 (APPPEPAPAPEPAPEA) has biased composition (pro residues). Positions 537–579 (REELLRALESAGWVQAKAARLLGMTPRQIAYALQKFEIELRKI) are C-terminal DNA-binding domain. The segment at residues 551 to 570 (QAKAARLLGMTPRQIAYALQ) is a DNA-binding region (H-T-H motif).

Interacts with sigma-54.

Required for activation of most nif operons, which are directly involved in nitrogen fixation. This is Nif-specific regulatory protein (nifA1) from Rhodobacter capsulatus (strain ATCC BAA-309 / NBRC 16581 / SB1003).